The primary structure comprises 238 residues: tRNA (guanine-N(1)-)-methyltransferase (238 aa).

S-adenosyl-L-methionine-binding positions include Gly-110 and 129-134; that span reads LGDFIL.

This sequence belongs to the RNA methyltransferase TrmD family. Homodimer.

It is found in the cytoplasm. It catalyses the reaction guanosine(37) in tRNA + S-adenosyl-L-methionine = N(1)-methylguanosine(37) in tRNA + S-adenosyl-L-homocysteine + H(+). Specifically methylates guanosine-37 in various tRNAs. The protein is tRNA (guanine-N(1)-)-methyltransferase of Clostridium botulinum (strain Eklund 17B / Type B).